The primary structure comprises 102 residues: NADH-quinone oxidoreductase subunit K (102 aa).

A run of 3 helical transmembrane segments spans residues 5 to 25, 31 to 51, and 66 to 86; these read ITHY…GIFL, IIIL…FVAF, and FVLT…VVFF.

Belongs to the complex I subunit 4L family. In terms of assembly, NDH-1 is composed of 14 different subunits. Subunits NuoA, H, J, K, L, M, N constitute the membrane sector of the complex.

It is found in the cell inner membrane. It carries out the reaction a quinone + NADH + 5 H(+)(in) = a quinol + NAD(+) + 4 H(+)(out). In terms of biological role, NDH-1 shuttles electrons from NADH, via FMN and iron-sulfur (Fe-S) centers, to quinones in the respiratory chain. The immediate electron acceptor for the enzyme in this species is believed to be ubiquinone. Couples the redox reaction to proton translocation (for every two electrons transferred, four hydrogen ions are translocated across the cytoplasmic membrane), and thus conserves the redox energy in a proton gradient. The sequence is that of NADH-quinone oxidoreductase subunit K from Bartonella tribocorum (strain CIP 105476 / IBS 506).